Consider the following 172-residue polypeptide: Melanocortin-2 receptor accessory protein (172 aa).

A helical membrane pass occupies residues 38–58 (IVIAFWVSLAAFVVLLFLILL). Disordered stretches follow at residues 105-130 (QAQA…SSST) and 152-172 (PLVR…QLQS).

This sequence belongs to the MRAP family. As to quaternary structure, homodimer and heterodimer. Forms antiparallel homodimers and heterodimers with MRAP2. Interacts with MC1R, MC2R, MC3R, MC4R and MC5R.

It localises to the cell membrane. Its subcellular location is the endoplasmic reticulum membrane. Modulator of melanocortin receptors (MC1R, MC2R, MC3R, MC4R and MC5R). Acts by increasing ligand-sensitivity of melanocortin receptors and enhancing generation of cAMP by the receptors. Required both for MC2R trafficking to the cell surface of adrenal cells and for signaling in response to corticotropin (ACTH). May be involved in the intracellular trafficking pathways in adipocyte cells. In Pan troglodytes (Chimpanzee), this protein is Melanocortin-2 receptor accessory protein (MRAP).